A 133-amino-acid chain; its full sequence is ATP synthase epsilon chain, chloroplastic (133 aa).

This sequence belongs to the ATPase epsilon chain family. As to quaternary structure, F-type ATPases have 2 components, CF(1) - the catalytic core - and CF(0) - the membrane proton channel. CF(1) has five subunits: alpha(3), beta(3), gamma(1), delta(1), epsilon(1). CF(0) has three main subunits: a, b and c.

The protein resides in the plastid. The protein localises to the chloroplast thylakoid membrane. Functionally, produces ATP from ADP in the presence of a proton gradient across the membrane. In Phaeodactylum tricornutum (strain CCAP 1055/1), this protein is ATP synthase epsilon chain, chloroplastic.